The chain runs to 138 residues: Putative pre-16S rRNA nuclease (138 aa).

It belongs to the YqgF nuclease family.

It localises to the cytoplasm. In terms of biological role, could be a nuclease involved in processing of the 5'-end of pre-16S rRNA. This chain is Putative pre-16S rRNA nuclease, found in Geobacillus sp. (strain WCH70).